The primary structure comprises 384 residues: Succinyl-diaminopimelate desuccinylase (384 aa).

His71 provides a ligand contact to Zn(2+). Asp73 is an active-site residue. A Zn(2+)-binding site is contributed by Asp104. Glu138 (proton acceptor) is an active-site residue. Residues Glu139, Glu167, and His353 each coordinate Zn(2+).

Belongs to the peptidase M20A family. DapE subfamily. Homodimer. Requires Zn(2+) as cofactor. Co(2+) is required as a cofactor.

The enzyme catalyses N-succinyl-(2S,6S)-2,6-diaminopimelate + H2O = (2S,6S)-2,6-diaminopimelate + succinate. It functions in the pathway amino-acid biosynthesis; L-lysine biosynthesis via DAP pathway; LL-2,6-diaminopimelate from (S)-tetrahydrodipicolinate (succinylase route): step 3/3. Catalyzes the hydrolysis of N-succinyl-L,L-diaminopimelic acid (SDAP), forming succinate and LL-2,6-diaminopimelate (DAP), an intermediate involved in the bacterial biosynthesis of lysine and meso-diaminopimelic acid, an essential component of bacterial cell walls. This Aromatoleum aromaticum (strain DSM 19018 / LMG 30748 / EbN1) (Azoarcus sp. (strain EbN1)) protein is Succinyl-diaminopimelate desuccinylase.